A 106-amino-acid chain; its full sequence is Urease subunit beta (106 aa).

Belongs to the urease beta subunit family. In terms of assembly, heterotrimer of UreA (gamma), UreB (beta) and UreC (alpha) subunits. Three heterotrimers associate to form the active enzyme.

Its subcellular location is the cytoplasm. The catalysed reaction is urea + 2 H2O + H(+) = hydrogencarbonate + 2 NH4(+). It functions in the pathway nitrogen metabolism; urea degradation; CO(2) and NH(3) from urea (urease route): step 1/1. The sequence is that of Urease subunit beta from Synechococcus sp. (strain CC9605).